Here is a 194-residue protein sequence, read N- to C-terminus: Methylated-DNA--protein-cysteine methyltransferase (194 aa).

DNA is bound by residues Tyr-125 and Arg-139. Cys-156 acts as the Nucleophile; methyl group acceptor in catalysis. Ser-162 is a DNA binding site.

Belongs to the MGMT family.

The protein localises to the nucleus. It carries out the reaction a 6-O-methyl-2'-deoxyguanosine in DNA + L-cysteinyl-[protein] = S-methyl-L-cysteinyl-[protein] + a 2'-deoxyguanosine in DNA. The enzyme catalyses a 4-O-methyl-thymidine in DNA + L-cysteinyl-[protein] = a thymidine in DNA + S-methyl-L-cysteinyl-[protein]. Its function is as follows. Involved in the cellular defense against the biological effects of O6-methylguanine (O6-MeG) and O4-methylthymine (O4-MeT) in DNA. Repairs the methylated nucleobase in DNA by stoichiometrically transferring the methyl group to a cysteine residue in the enzyme. This is a suicide reaction: the enzyme is irreversibly inactivated. The chain is Methylated-DNA--protein-cysteine methyltransferase (MGT1) from Scheffersomyces stipitis (strain ATCC 58785 / CBS 6054 / NBRC 10063 / NRRL Y-11545) (Yeast).